The chain runs to 100 residues: Urease subunit gamma (100 aa).

This sequence belongs to the urease gamma subunit family. As to quaternary structure, heterotrimer of UreA (gamma), UreB (beta) and UreC (alpha) subunits. Three heterotrimers associate to form the active enzyme.

It is found in the cytoplasm. The catalysed reaction is urea + 2 H2O + H(+) = hydrogencarbonate + 2 NH4(+). The protein operates within nitrogen metabolism; urea degradation; CO(2) and NH(3) from urea (urease route): step 1/1. The sequence is that of Urease subunit gamma from Cereibacter sphaeroides (strain ATCC 17025 / ATH 2.4.3) (Rhodobacter sphaeroides).